A 417-amino-acid polypeptide reads, in one-letter code: Tyrosine--tRNA ligase (417 aa).

Tyrosine 34 is an L-tyrosine binding site. The 'HIGH' region signature appears at 39–48 (PTAKSIHIGN). Residues tyrosine 165 and glutamine 169 each contribute to the L-tyrosine site. The 'KMSKS' region signature appears at 227–231 (KFGKS). An ATP-binding site is contributed by lysine 230. Positions 349–416 (TDVVELLVKD…GKKKYFLAKV (68 aa)) constitute an S4 RNA-binding domain.

The protein belongs to the class-I aminoacyl-tRNA synthetase family. TyrS type 1 subfamily. Homodimer.

The protein localises to the cytoplasm. It catalyses the reaction tRNA(Tyr) + L-tyrosine + ATP = L-tyrosyl-tRNA(Tyr) + AMP + diphosphate + H(+). Its function is as follows. Catalyzes the attachment of tyrosine to tRNA(Tyr) in a two-step reaction: tyrosine is first activated by ATP to form Tyr-AMP and then transferred to the acceptor end of tRNA(Tyr). In Oenococcus oeni (strain ATCC BAA-331 / PSU-1), this protein is Tyrosine--tRNA ligase.